Reading from the N-terminus, the 28-residue chain is Kalata-B12 (28 aa).

Residues 1-28 constitute a cross-link (cyclopeptide (Gly-Asp)); sequence GSLCGDTCFVLGCNDSSCSCNYPICVKD. Intrachain disulfides connect Cys-4-Cys-18, Cys-8-Cys-20, and Cys-13-Cys-25.

In terms of processing, this is a cyclic peptide.

Probably participates in a plant defense mechanism. The chain is Kalata-B12 from Oldenlandia affinis.